Here is a 394-residue protein sequence, read N- to C-terminus: Elongation factor Tu (394 aa).

A tr-type G domain is found at 10-205; the sequence is KPHMNVGTIG…SMDNYFDLPE (196 aa). Residues 19 to 26 form a G1 region; sequence GHVDHGKT. 19-26 contributes to the GTP binding site; it reads GHVDHGKT. Residue threonine 26 coordinates Mg(2+). The segment at 61 to 65 is G2; sequence GITIN. The interval 82–85 is G3; that stretch reads DCPG. GTP-binding positions include 82-86 and 137-140; these read DCPGH and NKLD. The tract at residues 137–140 is G4; sequence NKLD. Residues 173 to 175 are G5; it reads SAF.

The protein belongs to the TRAFAC class translation factor GTPase superfamily. Classic translation factor GTPase family. EF-Tu/EF-1A subfamily. As to quaternary structure, monomer.

It localises to the cytoplasm. It catalyses the reaction GTP + H2O = GDP + phosphate + H(+). Functionally, GTP hydrolase that promotes the GTP-dependent binding of aminoacyl-tRNA to the A-site of ribosomes during protein biosynthesis. In Borreliella burgdorferi (strain ATCC 35210 / DSM 4680 / CIP 102532 / B31) (Borrelia burgdorferi), this protein is Elongation factor Tu.